Reading from the N-terminus, the 3051-residue chain is Biorientation of chromosomes in cell division protein 1-like 1 (3051 aa).

Residues 1–33 (MATNPQPQPPPPAPPPPPPQPQPQPPPPPPGPG) are compositionally biased toward pro residues. 5 disordered regions span residues 1-47 (MATN…AGAG), 164-197 (HKEE…SANV), 215-288 (ASAA…CPVE), 301-393 (ILLN…KEDF), and 411-469 (VHTS…VRHA). The segment covering 34–47 (AGPGAGGAGGAGAG) has biased composition (gly residues). Over residues 215–227 (ASAARASTETSNA) the composition is skewed to low complexity. Positions 246-263 (STDKERTSEDMADKEKST) are enriched in basic and acidic residues. Serine 266 bears the Phosphoserine mark. Over residues 312–393 (SEQKNKSTDK…KTVEGTKEDF (82 aa)) the composition is skewed to basic and acidic residues. Acidic residues predominate over residues 418–443 (SFEEDTEEEVVTSDSMEEGEITSDDE). Lysine 473 carries the post-translational modification N6-acetyllysine. Phosphoserine occurs at positions 482 and 484. Basic and acidic residues-rich tracts occupy residues 497 to 527 (IAKE…EKTK), 549 to 570 (LEPK…EKKV), and 580 to 653 (SRNV…LERE). The tract at residues 497 to 1203 (IAKEKEERLL…EKHADHRSTL (707 aa)) is disordered. Phosphoserine occurs at positions 635 and 659. Phosphothreonine occurs at positions 660 and 733. 6 stretches are compositionally biased toward basic and acidic residues: residues 671–772 (TDTR…EENI), 804–852 (KDGK…KIQK), 866–878 (RRSE…KCDM), 940–966 (KPDK…KPFE), 984–1021 (TQKD…DGHK), and 1028–1075 (SSKD…ENRR). A Phosphoserine modification is found at serine 1077. Composition is skewed to polar residues over residues 1092–1103 (NTLSTPSGSSLQ) and 1135–1148 (SKTQ…SQQD). A phosphoserine mark is found at serine 1145 and serine 1318. Threonine 1354 is modified (phosphothreonine). Disordered regions lie at residues 1456-1550 (KLKH…QSEV), 1700-1725 (GSIS…ETEG), and 1760-1890 (VVLG…TGLG). Residues 1465-1479 (KVKDISIDVERRNEN) show a composition bias toward basic and acidic residues. Over residues 1482-1504 (VDTSAGSGSAPSVLHQRNGQTED) the composition is skewed to polar residues. Residues serine 1531, serine 1701, and serine 1710 each carry the phosphoserine modification. Phosphoserine is present on residues serine 2013, serine 2025, serine 2128, and serine 2203. 6 disordered regions span residues 2189–2210 (DFEG…STSK), 2258–2285 (TSSV…TPAE), 2403–2447 (STEE…FAGR), 2472–2519 (EDKS…AKDP), 2615–2635 (DQAS…FPEE), and 2717–3051 (VENS…KAKR). The span at 2191–2207 (EGPMPSAPPEAESPLAS) shows a compositional bias: low complexity. Over residues 2428 to 2439 (AEKEEKHGKECP) the composition is skewed to basic and acidic residues. At serine 2475 the chain carries Phosphoserine. Low complexity predominate over residues 2483-2492 (GSSTASYSAG). 2 positions are modified to phosphoserine: serine 2501 and serine 2618. 3 stretches are compositionally biased toward basic and acidic residues: residues 2621-2633 (KTGD…KSFP), 2724-2746 (TNEE…KDNA), and 2754-2767 (VEAD…EERH). Over residues 2780–2789 (SEDEPDDNPD) the composition is skewed to acidic residues. Residues 2791-2822 (LDSRIETAQRQCPETEPHDTKEENSRDLEELP) are compositionally biased toward basic and acidic residues. Residues 2823–2834 (KTSSETNSTTSR) show a composition bias toward polar residues. A compositionally biased stretch (basic and acidic residues) spans 2848 to 2864 (TGEKPEQNDDDTIKSQE). The segment covering 2871–2880 (IKRKRGRPRK) has biased composition (basic residues). Positions 2872-2884 (KRKRGRPRKYPVE) form a DNA-binding region, a.T hook. Residues 2896 to 2910 (DTGIVTVEQSPSSSK) show a composition bias toward polar residues. Phosphoserine occurs at positions 2905 and 2907. Over residues 2944-2953 (VRRRGRKPKR) the composition is skewed to basic residues. Phosphoserine is present on serine 2954. Position 2956 is a phosphothreonine (threonine 2956). A phosphoserine mark is found at serine 2958, serine 2964, and serine 2973. Residues lysine 2981 and lysine 2982 each participate in a glycyl lysine isopeptide (Lys-Gly) (interchain with G-Cter in ubiquitin) cross-link. Residues 2985 to 2998 (ESDEEEEEEEEDEP) are compositionally biased toward acidic residues. 2 positions are modified to phosphoserine: serine 2986 and serine 3019. Residues 3000-3020 (GATTRSTTRSEAQRSKTQLSP) show a composition bias toward polar residues. Residues 3039–3051 (QRVEEAPVKKAKR) are compositionally biased toward basic and acidic residues.

This sequence belongs to the BOD1 family. As to quaternary structure, interacts (via COMPASS-Shg1 domain) with SETD1A at stalled replication forks; this interaction mediates FANCD2-dependent nucleosome remodeling at reversed forks protecting them from nucleolytic degradation.

Its subcellular location is the chromosome. Component of the fork protection machinery required to protect stalled/damaged replication forks from uncontrolled DNA2-dependent resection. Acts by stabilizing RAD51 at stalled replication forks and protecting RAD51 nucleofilaments from the antirecombinogenic activities of FBH1 and BLM. Does not regulate spindle orientation. The polypeptide is Biorientation of chromosomes in cell division protein 1-like 1 (Homo sapiens (Human)).